Consider the following 373-residue polypeptide: Enoyl-[acyl-carrier-protein] reductase, mitochondrial (373 aa).

The N-terminal 53 residues, 1–53 (MLVSRRLTGARARAPLLASLLEAWCRQGRTTSSYSAFSEPSHVRALVYGNHGD), are a transit peptide targeting the mitochondrion. Lys-61 is subject to N6-acetyllysine; alternate. N6-succinyllysine; alternate is present on Lys-61. Tyr-94 functions as the Proton donor in the catalytic mechanism. Residues Asn-167, 193 to 196 (NSGV), and 216 to 218 (RDR) contribute to the NADP(+) site. N6-acetyllysine; alternate occurs at positions 252 and 267. N6-succinyllysine; alternate occurs at positions 252 and 267. Residues 285–288 (YGGM) and 310–312 (FWL) contribute to the NADP(+) site. Lys-316 is modified (N6-succinyllysine). Position 368 (Lys-368) interacts with NADP(+).

The protein belongs to the zinc-containing alcohol dehydrogenase family. Quinone oxidoreductase subfamily. In terms of assembly, homodimer. Interacts with PPARA in the nucleus and increases its activity.

The protein resides in the mitochondrion. Its subcellular location is the cytoplasm. It localises to the nucleus. The enzyme catalyses a 2,3-saturated acyl-[ACP] + NADP(+) = a (2E)-enoyl-[ACP] + NADPH + H(+). It carries out the reaction (2E)-butenoyl-[ACP] + NADPH + H(+) = butanoyl-[ACP] + NADP(+). The catalysed reaction is (2E)-hexenoyl-[ACP] + NADPH + H(+) = hexanoyl-[ACP] + NADP(+). It catalyses the reaction (2E)-octenoyl-[ACP] + NADPH + H(+) = octanoyl-[ACP] + NADP(+). The enzyme catalyses (2E)-decenoyl-[ACP] + NADPH + H(+) = decanoyl-[ACP] + NADP(+). It carries out the reaction (2E)-dodecenoyl-[ACP] + NADPH + H(+) = dodecanoyl-[ACP] + NADP(+). The catalysed reaction is (2E)-tetradecenoyl-[ACP] + NADPH + H(+) = tetradecanoyl-[ACP] + NADP(+). It catalyses the reaction (2E)-hexadecenoyl-[ACP] + NADPH + H(+) = hexadecanoyl-[ACP] + NADP(+). Catalyzes the NADPH-dependent reduction of trans-2-enoyl thioesters in mitochondrial fatty acid synthesis (fatty acid synthesis type II). Fatty acid chain elongation in mitochondria uses acyl carrier protein (ACP) as an acyl group carrier, but the enzyme accepts both ACP and CoA thioesters as substrates in vitro. Displays a preference for medium-chain over short- and long-chain substrates. May provide the octanoyl chain used for lipoic acid biosynthesis, regulating protein lipoylation and mitochondrial respiratory activity particularly in Purkinje cells. Involved in iron homeostasis; affecting Fe-S cluster assembly and ceramide metabolism. Required for proper morphology and bioenergetic functions of mitochondria. Required for maintenance of neurons. This chain is Enoyl-[acyl-carrier-protein] reductase, mitochondrial (Mecr), found in Rattus norvegicus (Rat).